The following is a 188-amino-acid chain: dCTP deaminase (188 aa).

Residues 111-116 (KSTYAR), 135-137 (TLE), Gln-156, Tyr-170, Lys-179, and Gln-180 each bind dCTP. The active-site Proton donor/acceptor is the Glu-137.

The protein belongs to the dCTP deaminase family. In terms of assembly, homotrimer.

The catalysed reaction is dCTP + H2O + H(+) = dUTP + NH4(+). It participates in pyrimidine metabolism; dUMP biosynthesis; dUMP from dCTP (dUTP route): step 1/2. Functionally, catalyzes the deamination of dCTP to dUTP. This is dCTP deaminase from Rickettsia canadensis (strain McKiel).